Consider the following 824-residue polypeptide: Acyl-homoserine lactone acylase QuiP (824 aa).

Positions 1–26 (MASPALRHFLPRFGAAAAAASFLSLA) are cleaved as a signal peptide. Catalysis depends on Ser-264, which acts as the Nucleophile.

This sequence belongs to the peptidase S45 family. In terms of assembly, heterodimer of an alpha subunit and a beta subunit processed from the same precursor.

It localises to the periplasm. It carries out the reaction an N-acyl-L-homoserine lactone + H2O = L-homoserine lactone + a carboxylate. Its function is as follows. Catalyzes the deacylation of acyl-homoserine lactone (AHL or acyl-HSL), releasing homoserine lactone (HSL) and the corresponding fatty acid. Possesses a specificity for the degradation of long-chain acyl-HSLs (side chains of seven or more carbons in length). The chain is Acyl-homoserine lactone acylase QuiP (quiP) from Pseudomonas syringae pv. tomato (strain ATCC BAA-871 / DC3000).